Here is a 273-residue protein sequence, read N- to C-terminus: 4-hydroxy-tetrahydrodipicolinate reductase (273 aa).

NAD(+) is bound by residues 12 to 17 (GAGGRM) and Glu-38. Residue Arg-39 participates in NADP(+) binding. NAD(+)-binding positions include 102–104 (GTT) and 126–129 (AANF). Residue His-159 is the Proton donor/acceptor of the active site. Position 160 (His-160) interacts with (S)-2,3,4,5-tetrahydrodipicolinate. Lys-163 serves as the catalytic Proton donor. 169-170 (GT) provides a ligand contact to (S)-2,3,4,5-tetrahydrodipicolinate.

The protein belongs to the DapB family. In terms of assembly, homotetramer.

The protein localises to the cytoplasm. It carries out the reaction (S)-2,3,4,5-tetrahydrodipicolinate + NAD(+) + H2O = (2S,4S)-4-hydroxy-2,3,4,5-tetrahydrodipicolinate + NADH + H(+). The enzyme catalyses (S)-2,3,4,5-tetrahydrodipicolinate + NADP(+) + H2O = (2S,4S)-4-hydroxy-2,3,4,5-tetrahydrodipicolinate + NADPH + H(+). It functions in the pathway amino-acid biosynthesis; L-lysine biosynthesis via DAP pathway; (S)-tetrahydrodipicolinate from L-aspartate: step 4/4. Its function is as follows. Catalyzes the conversion of 4-hydroxy-tetrahydrodipicolinate (HTPA) to tetrahydrodipicolinate. The protein is 4-hydroxy-tetrahydrodipicolinate reductase of Escherichia coli (strain K12 / MC4100 / BW2952).